The primary structure comprises 879 residues: Phosphoenolpyruvate carboxylase (879 aa).

Active-site residues include H138 and K545.

This sequence belongs to the PEPCase type 1 family. It depends on Mg(2+) as a cofactor.

It catalyses the reaction oxaloacetate + phosphate = phosphoenolpyruvate + hydrogencarbonate. Forms oxaloacetate, a four-carbon dicarboxylic acid source for the tricarboxylic acid cycle. The sequence is that of Phosphoenolpyruvate carboxylase from Actinobacillus pleuropneumoniae serotype 5b (strain L20).